Here is a 116-residue protein sequence, read N- to C-terminus: Large ribosomal subunit protein bL20 (116 aa).

Belongs to the bacterial ribosomal protein bL20 family.

Functionally, binds directly to 23S ribosomal RNA and is necessary for the in vitro assembly process of the 50S ribosomal subunit. It is not involved in the protein synthesizing functions of that subunit. This is Large ribosomal subunit protein bL20 from Thermosynechococcus vestitus (strain NIES-2133 / IAM M-273 / BP-1).